The chain runs to 247 residues: MQYNFKVEAFEGPLDLLLHLIHRYEIDIYNIPVAEITEQYLSYVHTMKELQLDVASEYLVMAATLLQIKSKMLLPKHEEDVLDNGDDFIDDPRQELMERLIEYKKYKQVATELKEREQERAQLYTRPPIDFTSLQQEEETSLPLDVTLYDMLAAFQKLMRRKKAKKPVTTRITRQEIPIEQRMTDILKLLEIQGGRQSFYDLFVDDEREIMVVTFLAVLELMKNQQIVIEQEHNFDEIFVSSYTKSA.

Belongs to the ScpA family. Component of a cohesin-like complex composed of ScpA, ScpB and the Smc homodimer, in which ScpA and ScpB bind to the head domain of Smc. The presence of the three proteins is required for the association of the complex with DNA.

Its subcellular location is the cytoplasm. Participates in chromosomal partition during cell division. May act via the formation of a condensin-like complex containing Smc and ScpB that pull DNA away from mid-cell into both cell halves. The sequence is that of Segregation and condensation protein A from Bacillus cereus (strain AH187).